A 195-amino-acid polypeptide reads, in one-letter code: 3-hydroxyanthranilate 3,4-dioxygenase (195 aa).

Arg-50 contacts O2. 3 residues coordinate Fe cation: His-54, Glu-60, and His-102. Glu-60 is a substrate binding site. 2 residues coordinate substrate: Arg-106 and Glu-116. Residues Cys-131, Cys-136, Cys-170, and Cys-173 each coordinate a divalent metal cation.

Belongs to the 3-HAO family. It depends on Fe(2+) as a cofactor.

It is found in the cytoplasm. The catalysed reaction is 3-hydroxyanthranilate + O2 = (2Z,4Z)-2-amino-3-carboxymuconate 6-semialdehyde. The protein operates within cofactor biosynthesis; NAD(+) biosynthesis; quinolinate from L-kynurenine: step 3/3. Catalyzes the oxidative ring opening of 3-hydroxyanthranilate to 2-amino-3-carboxymuconate semialdehyde, which spontaneously cyclizes to quinolinate. This is 3-hydroxyanthranilate 3,4-dioxygenase (bna1) from Aspergillus terreus (strain NIH 2624 / FGSC A1156).